The chain runs to 266 residues: Zinc transporter ZupT (266 aa).

8 helical membrane-spanning segments follow: residues 8–28, 36–56, 71–91, 123–143, 152–172, 185–205, 209–229, and 246–266; these read LLLT…ALAV, LALS…MEII, AGAW…WAID, GIFT…AVFF, GIVI…AVAV, FSLS…GYTL, FLTP…MVYI, and LAIT…LLLT. Fe(2+)-binding residues include Asn-134 and Glu-137. The Zn(2+) site is built by Glu-137 and His-162. Fe(2+) contacts are provided by Asn-163, Glu-166, and Glu-195. Glu-166 is a Zn(2+) binding site.

It belongs to the ZIP transporter (TC 2.A.5) family. ZupT subfamily.

It is found in the cell inner membrane. It carries out the reaction Zn(2+)(in) = Zn(2+)(out). Its function is as follows. Mediates zinc uptake. May also transport other divalent cations. The polypeptide is Zinc transporter ZupT (Chlorobium luteolum (strain DSM 273 / BCRC 81028 / 2530) (Pelodictyon luteolum)).